Consider the following 486-residue polypeptide: Glutamate--tRNA ligase (486 aa).

The 'HIGH' region motif lies at 11 to 21; sequence PSPTGFLHIGG. 4 residues coordinate Zn(2+): Cys108, Cys110, Cys136, and His138. The 'KMSKS' region motif lies at 253-257; sequence KLSKR. Lys256 is an ATP binding site.

The protein belongs to the class-I aminoacyl-tRNA synthetase family. Glutamate--tRNA ligase type 1 subfamily. In terms of assembly, monomer. Requires Zn(2+) as cofactor.

It localises to the cytoplasm. The catalysed reaction is tRNA(Glu) + L-glutamate + ATP = L-glutamyl-tRNA(Glu) + AMP + diphosphate. Its function is as follows. Catalyzes the attachment of glutamate to tRNA(Glu) in a two-step reaction: glutamate is first activated by ATP to form Glu-AMP and then transferred to the acceptor end of tRNA(Glu). In Lysinibacillus sphaericus (strain C3-41), this protein is Glutamate--tRNA ligase.